The following is a 200-amino-acid chain: Small ribosomal subunit protein uS4 (200 aa).

Positions 22–42 (TGKELEKRPYAPGPHGPNQRK) are disordered. The region spanning 92-152 (ARLDNLVYRM…EKSRNLAVIK (61 aa)) is the S4 RNA-binding domain.

Belongs to the universal ribosomal protein uS4 family. Part of the 30S ribosomal subunit. Contacts protein S5. The interaction surface between S4 and S5 is involved in control of translational fidelity.

In terms of biological role, one of the primary rRNA binding proteins, it binds directly to 16S rRNA where it nucleates assembly of the body of the 30S subunit. Functionally, with S5 and S12 plays an important role in translational accuracy. The sequence is that of Small ribosomal subunit protein uS4 from Bacillus cytotoxicus (strain DSM 22905 / CIP 110041 / 391-98 / NVH 391-98).